The primary structure comprises 346 residues: NADH-ubiquinone oxidoreductase chain 2 (346 aa).

10 helical membrane-spanning segments follow: residues 25–45 (HWIL…PLIS), 52–72 (AIEA…LILF), 95–115 (CLIL…HFWF), 124–144 (LITA…LLLM), 149–169 (LNPA…GWMG), 178–196 (ILAF…IIIY), 200–219 (LTIL…FLSL), 247–267 (TLLS…WLII), 274–294 (EMTP…FFYL), and 326–346 (AILT…TTLV).

Belongs to the complex I subunit 2 family.

It localises to the mitochondrion inner membrane. It carries out the reaction a ubiquinone + NADH + 5 H(+)(in) = a ubiquinol + NAD(+) + 4 H(+)(out). Core subunit of the mitochondrial membrane respiratory chain NADH dehydrogenase (Complex I) that is believed to belong to the minimal assembly required for catalysis. Complex I functions in the transfer of electrons from NADH to the respiratory chain. The immediate electron acceptor for the enzyme is believed to be ubiquinone. The protein is NADH-ubiquinone oxidoreductase chain 2 (MT-ND2) of Coturnix japonica (Japanese quail).